Consider the following 246-residue polypeptide: Serine protease 1 (246 aa).

Positions 1–15 are cleaved as a signal peptide; that stretch reads MKTFIFLALLGATVA. Residues 16–23 constitute a propeptide, activation peptide; the sequence is FPIDDDDK. A Peptidase S1 domain is found at 24–244; the sequence is IVGGYTCSRN…YVSWIQQTIA (221 aa). Intrachain disulfides connect cysteine 30–cysteine 160, cysteine 48–cysteine 64, cysteine 132–cysteine 233, cysteine 139–cysteine 206, cysteine 171–cysteine 185, and cysteine 196–cysteine 220. Histidine 63 functions as the Charge relay system in the catalytic mechanism. Ca(2+) contacts are provided by glutamate 75, asparagine 77, valine 80, and glutamate 85. Catalysis depends on aspartate 107, which acts as the Charge relay system. The active-site Charge relay system is serine 200.

It belongs to the peptidase S1 family. In terms of assembly, interacts with SERPINA1. It depends on Ca(2+) as a cofactor.

The protein resides in the secreted. The protein localises to the extracellular space. The catalysed reaction is Preferential cleavage: Arg-|-Xaa, Lys-|-Xaa.. The sequence is that of Serine protease 1 from Canis lupus familiaris (Dog).